The sequence spans 136 residues: Putative pre-16S rRNA nuclease (136 aa).

Belongs to the YqgF nuclease family.

It localises to the cytoplasm. Functionally, could be a nuclease involved in processing of the 5'-end of pre-16S rRNA. This is Putative pre-16S rRNA nuclease from Francisella philomiragia subsp. philomiragia (strain ATCC 25017 / CCUG 19701 / FSC 153 / O#319-036).